We begin with the raw amino-acid sequence, 300 residues long: Probable lipid kinase YegS-like (300 aa).

Residues 1-129 form the DAGKc domain; the sequence is MSKKALLILH…CDVIRVNNHY (129 aa). ATP is bound by residues threonine 38, 64–70, and threonine 92; that span reads GDGSVRD. Residues leucine 210, aspartate 213, and leucine 215 each contribute to the Mg(2+) site. The Proton acceptor role is filled by glutamate 272.

This sequence belongs to the diacylglycerol/lipid kinase family. YegS lipid kinase subfamily. Requires Mg(2+) as cofactor. Ca(2+) serves as cofactor.

The protein resides in the cytoplasm. Its function is as follows. Probably phosphorylates lipids; the in vivo substrate is unknown. The chain is Probable lipid kinase YegS-like from Alcanivorax borkumensis (strain ATCC 700651 / DSM 11573 / NCIMB 13689 / SK2).